The chain runs to 366 residues: Alanine racemase (366 aa).

The Proton acceptor; specific for D-alanine role is filled by lysine 33. Lysine 33 bears the N6-(pyridoxal phosphate)lysine mark. Arginine 129 contacts substrate. Residue tyrosine 253 is the Proton acceptor; specific for L-alanine of the active site. Methionine 301 contacts substrate.

The protein belongs to the alanine racemase family. Pyridoxal 5'-phosphate serves as cofactor.

The enzyme catalyses L-alanine = D-alanine. The protein operates within amino-acid biosynthesis; D-alanine biosynthesis; D-alanine from L-alanine: step 1/1. Its function is as follows. Catalyzes the interconversion of L-alanine and D-alanine. May also act on other amino acids. This is Alanine racemase (alr) from Xanthomonas axonopodis pv. citri (strain 306).